Here is a 333-residue protein sequence, read N- to C-terminus: Neuropeptides B/W receptor type 2 (333 aa).

The Extracellular segment spans residues 1 to 45 (MQAAGHPEPLDSRGSFSLPTMGANVSQDNGTGHNATFSEPLPFLY). N24, N29, and N34 each carry an N-linked (GlcNAc...) asparagine glycan. A helical membrane pass occupies residues 46–69 (VLLPAVYSGICAVGLTGNTAVILV). Over 70 to 80 (ILRAPKMKTVT) the chain is Cytoplasmic. A helical transmembrane segment spans residues 81-105 (NVFILNLAVADGLFTLVLPVNIAEH). The Extracellular portion of the chain corresponds to 106 to 120 (LLQYWPFGELLCKLV). An intrachain disulfide couples C117 to C197. The helical transmembrane segment at 121-140 (LAVDHYNIFSSIYFLAVMSV) threads the bilayer. The Cytoplasmic portion of the chain corresponds to 141–165 (DRYLVVLATVRSRHMPWRTYRGAKV). The chain crosses the membrane as a helical span at residues 166–185 (ASLCVWLGVTVLVLPFFSFA). Topologically, residues 186–211 (GVYSNELQVPSCGLSFPWPEQVWFKA) are extracellular. Residues 212 to 233 (SRVYTLVLGFVLPVCTICVLYT) form a helical membrane-spanning segment. The Cytoplasmic portion of the chain corresponds to 234–257 (DLLRRLRAVRLRSGAKALGKARRK). A helical membrane pass occupies residues 258–282 (VTVLVLVVLAVCLLCWTPFHLASVV). Residues 283–292 (ALTTDLPQTP) are Extracellular-facing. Residues 293-307 (LVISMSYVITSLSYA) form a helical membrane-spanning segment. Over 308-333 (NSCLNPFLYAFLDDNFRKNFRSILRC) the chain is Cytoplasmic.

It belongs to the G-protein coupled receptor 1 family. As to expression, detected at high levels in caudate nucleus, hippocampus and amygdala; at moderate levels in the adult brain, thalamus, parietal cortex, pituitary gland, adrenal gland and lymph nodes.

It localises to the cell membrane. In terms of biological role, interacts specifically with a number of opioid ligands. Receptor for neuropeptides B and W, which may be involved in neuroendocrine system regulation, food intake and the organization of other signals. This chain is Neuropeptides B/W receptor type 2 (NPBWR2), found in Homo sapiens (Human).